Here is a 464-residue protein sequence, read N- to C-terminus: Protein FAM90A23 (464 aa).

Disordered stretches follow at residues 1-42, 69-389, and 415-437; these read MMAR…DPRL, VPAT…HDGA, and HSPE…SEAP. 2 stretches are compositionally biased toward basic and acidic residues: residues 74 to 89 and 97 to 114; these read GKKE…KPRA and NKDK…DPQR. Over residues 180–197 the composition is skewed to low complexity; sequence LASLSPLRKASLSSSSSL.

The protein belongs to the FAM90 family.

In Homo sapiens (Human), this protein is Protein FAM90A23.